The chain runs to 466 residues: Probable sensor protein PcoS (466 aa).

Topologically, residues Met-1–Arg-10 are cytoplasmic. Residues Leu-11–Ile-31 form a helical membrane-spanning segment. The Periplasmic portion of the chain corresponds to Ser-32–Thr-171. The chain crosses the membrane as a helical span at residues Trp-172–Thr-192. Positions Arg-193 to Arg-246 constitute an HAMP domain. Over Arg-193–Asp-466 the chain is Cytoplasmic. Residues Asp-254–Asp-466 form the Histidine kinase domain. His-257 carries the phosphohistidine; by autocatalysis modification.

It localises to the cell inner membrane. The catalysed reaction is ATP + protein L-histidine = ADP + protein N-phospho-L-histidine.. Its function is as follows. Probable member of a two-component regulatory system PcoS/PcoR. May activate PcoR by phosphorylation. The protein is Probable sensor protein PcoS (pcoS) of Escherichia coli.